A 115-amino-acid chain; its full sequence is Nucleoid-associated protein Pro_0020 (115 aa).

Belongs to the YbaB/EbfC family. In terms of assembly, homodimer.

Its subcellular location is the cytoplasm. It is found in the nucleoid. Functionally, binds to DNA and alters its conformation. May be involved in regulation of gene expression, nucleoid organization and DNA protection. In Prochlorococcus marinus (strain SARG / CCMP1375 / SS120), this protein is Nucleoid-associated protein Pro_0020.